A 149-amino-acid polypeptide reads, in one-letter code: Transcriptional repressor NrdR (149 aa).

The segment at 3–34 (CPFCAAVDTKVIDSRLVGDGSQVRRRRQCLEC) is a zinc-finger region. Residues 49–139 (PRVIKSDDIR…VYRSFEDIRE (91 aa)) enclose the ATP-cone domain.

This sequence belongs to the NrdR family. Zn(2+) is required as a cofactor.

Negatively regulates transcription of bacterial ribonucleotide reductase nrd genes and operons by binding to NrdR-boxes. In Photorhabdus laumondii subsp. laumondii (strain DSM 15139 / CIP 105565 / TT01) (Photorhabdus luminescens subsp. laumondii), this protein is Transcriptional repressor NrdR.